The sequence spans 440 residues: Serine hydroxymethyltransferase (440 aa).

Residues Leu-119 and 123-125 contribute to the (6S)-5,6,7,8-tetrahydrofolate site; that span reads GHL. Lys-228 carries the post-translational modification N6-(pyridoxal phosphate)lysine. A (6S)-5,6,7,8-tetrahydrofolate-binding site is contributed by 370–372; sequence SPF.

Belongs to the SHMT family. In terms of assembly, homodimer. Requires pyridoxal 5'-phosphate as cofactor.

It is found in the cytoplasm. It catalyses the reaction (6R)-5,10-methylene-5,6,7,8-tetrahydrofolate + glycine + H2O = (6S)-5,6,7,8-tetrahydrofolate + L-serine. It functions in the pathway one-carbon metabolism; tetrahydrofolate interconversion. It participates in amino-acid biosynthesis; glycine biosynthesis; glycine from L-serine: step 1/1. In terms of biological role, catalyzes the reversible interconversion of serine and glycine with tetrahydrofolate (THF) serving as the one-carbon carrier. This reaction serves as the major source of one-carbon groups required for the biosynthesis of purines, thymidylate, methionine, and other important biomolecules. Also exhibits THF-independent aldolase activity toward beta-hydroxyamino acids, producing glycine and aldehydes, via a retro-aldol mechanism. In Chlorobium luteolum (strain DSM 273 / BCRC 81028 / 2530) (Pelodictyon luteolum), this protein is Serine hydroxymethyltransferase.